Here is a 610-residue protein sequence, read N- to C-terminus: Ubiquilin-like protein (610 aa).

Residues 31 to 105 (IRVIVKTPGN…IHVVIKSKHG (75 aa)) form the Ubiquitin-like domain. The UBA domain maps to 562–607 (QAPEVRFSKEMECLQAMGFVNYNANLQALIATDGDTNAAIYKLKSS).

In Mus musculus (Mouse), this protein is Ubiquilin-like protein (Ubqlnl).